The primary structure comprises 207 residues: MANVKLFDQTGKEVSSVELNDAVFGIEPNESVVFDVVISQRASLRQGTHAVKNRSAVSGGGRKPWRQKGTGRARQGSIRSPQWRGGGVVFGPTPRSYGYKLPQKVRRLALKSVYSAKVAEDKFVAVEGLSFAAPKTAEFAKVLSALSIDTKVLVLVEEGNEFAALSARNLPNVTVATAATASVLDIVNADKLLVTKEAISTIEEVLA.

The disordered stretch occupies residues 49–78 (HAVKNRSAVSGGGRKPWRQKGTGRARQGSI).

Belongs to the universal ribosomal protein uL4 family. Part of the 50S ribosomal subunit.

One of the primary rRNA binding proteins, this protein initially binds near the 5'-end of the 23S rRNA. It is important during the early stages of 50S assembly. It makes multiple contacts with different domains of the 23S rRNA in the assembled 50S subunit and ribosome. In terms of biological role, forms part of the polypeptide exit tunnel. In Streptococcus pyogenes serotype M49 (strain NZ131), this protein is Large ribosomal subunit protein uL4.